We begin with the raw amino-acid sequence, 65 residues long: uncharacterized protein (65 aa).

The first 22 residues, 1–22, serve as a signal peptide directing secretion; the sequence is MKFIKLFTFLVYLFVTLTNVFA.

This is an uncharacterized protein from Invertebrate iridescent virus 6 (IIV-6).